A 464-amino-acid chain; its full sequence is Protein FAM90A9 (464 aa).

3 disordered regions span residues 1 to 42 (MMAR…DPRL), 70 to 389 (PATL…HDGA), and 411 to 437 (APSF…SEAP). 2 stretches are compositionally biased toward basic and acidic residues: residues 74–89 (GKKE…KPRV) and 97–114 (NKDK…DPQR). Residues 180 to 197 (LASLSPLRKASLSSSSSL) are compositionally biased toward low complexity.

The protein belongs to the FAM90 family.

The sequence is that of Protein FAM90A9 (FAM90A9) from Homo sapiens (Human).